A 344-amino-acid chain; its full sequence is 2,3,4,5-tetrahydropyridine-2,6-dicarboxylate N-succinyltransferase (344 aa).

Glutamate 205 provides a ligand contact to Mg(2+). Glutamate 221 serves as the catalytic Acyl-anhydride intermediate. Succinyl-CoA is bound by residues arginine 223, glycine 238, serine 241, alanine 264, 279-280, glycine 287, lysine 304, and 317-320; these read EA and RRNS.

Belongs to the type 2 tetrahydrodipicolinate N-succinyltransferase family. In terms of assembly, homotrimer.

The protein resides in the cytoplasm. It catalyses the reaction (S)-2,3,4,5-tetrahydrodipicolinate + succinyl-CoA + H2O = (S)-2-succinylamino-6-oxoheptanedioate + CoA. Its pathway is amino-acid biosynthesis; L-lysine biosynthesis via DAP pathway; LL-2,6-diaminopimelate from (S)-tetrahydrodipicolinate (succinylase route): step 1/3. In terms of biological role, catalyzes the conversion of the cyclic tetrahydrodipicolinate (THDP) into the acyclic N-succinyl-L-2-amino-6-oxopimelate using succinyl-CoA. In Pseudomonas putida (strain ATCC 47054 / DSM 6125 / CFBP 8728 / NCIMB 11950 / KT2440), this protein is 2,3,4,5-tetrahydropyridine-2,6-dicarboxylate N-succinyltransferase.